Consider the following 221-residue polypeptide: Carbonic anhydrase (221 aa).

Residues Cys-38, Asp-40, His-99, and Cys-102 each contribute to the Zn(2+) site.

Belongs to the beta-class carbonic anhydrase family. It depends on Zn(2+) as a cofactor.

The enzyme catalyses hydrogencarbonate + H(+) = CO2 + H2O. The polypeptide is Carbonic anhydrase (cynT) (Helicobacter pylori (strain ATCC 700392 / 26695) (Campylobacter pylori)).